Reading from the N-terminus, the 492-residue chain is Putative sucrose transport protein SUC6 (492 aa).

Residues 1–26 are disordered; that stretch reads MSDLQANKDAAAVNRQSSSSSADLNG. The Cytoplasmic portion of the chain corresponds to 1-33; that stretch reads MSDLQANKDAAAVNRQSSSSSADLNGPSPMRKM. Residues 14-23 show a composition bias toward polar residues; sequence NRQSSSSSAD. Ser17 carries the phosphoserine modification. A helical membrane pass occupies residues 34–54; it reads ISVASIAAGIQFGWALQLSLL. The Extracellular segment spans residues 55 to 68; it reads TPYVQLLGVPHKWS. The helical transmembrane segment at 69 to 89 threads the bilayer; it reads SFIWLCGPVSGLLVQPSVGYF. Over 90-101 the chain is Cytoplasmic; the sequence is SDRCKSRFGRRR. A helical transmembrane segment spans residues 102-122; that stretch reads PFIAMGALLVAVAVVLIGYAA. Residues 123–139 are Extracellular-facing; that stretch reads DFGHSMGDKVDEPVKMR. A helical transmembrane segment spans residues 140-160; it reads AVVIFALGFWILDVANNTLQG. Topologically, residues 161 to 181 are cytoplasmic; that stretch reads PCRAFLGDLAAGDAKKTRTAN. Residues 182–202 form a helical membrane-spanning segment; that stretch reads AFFSFFMAVGNVLGYAAGSYT. Residues 203–224 are Extracellular-facing; that stretch reads NLYKIFPFTMTKACDIYCANLK. The chain crosses the membrane as a helical span at residues 225-245; it reads SCFFLSITLLLVVTIIALWYV. Residues 246–277 are Cytoplasmic-facing; that stretch reads EDKQWSPKADSDNEKTPFFGEIFGAFKVMKRP. Residues 278 to 298 traverse the membrane as a helical segment; the sequence is MWMLLIVTALNWIAWFPFLLY. The Extracellular segment spans residues 299–324; sequence DTDWMGREVYGGDSKGDDKMKKLYNQ. Residues 325-345 traverse the membrane as a helical segment; the sequence is GIHVGGLGLMLNSIVLGFMSL. Topologically, residues 346 to 359 are cytoplasmic; sequence GIEGISRKMGGAKR. A helical transmembrane segment spans residues 360–380; sequence LWGAVNIILAVCLAMTVLVTK. Over 381–403 the chain is Extracellular; that stretch reads KAEEHRRIAGPMALPTDGIRAGA. Residues 404–424 traverse the membrane as a helical segment; it reads LTLFALLGIPLAITFSIPFAL. The Cytoplasmic portion of the chain corresponds to 425–446; sequence ASIISSSSGAGQGLSLGVLNMT. The helical transmembrane segment at 447-467 threads the bilayer; sequence IVIPQMVVSFGVGPIDALFGG. Residues 468–469 lie on the Extracellular side of the membrane; that stretch reads GN. Residues 470-490 traverse the membrane as a helical segment; that stretch reads LPGFVVGAIAAAISSVVAFSV. The Cytoplasmic portion of the chain corresponds to 491-492; the sequence is LP.

The protein belongs to the glycoside-pentoside-hexuronide (GPH) cation symporter transporter (TC 2.A.2.4) family.

The protein localises to the cell membrane. Its pathway is glycan biosynthesis; sucrose metabolism. May be responsible for the transport of glucosides into the cell, with the concomitant uptake of protons (symport system). Does not seem to transport sucrose. This Arabidopsis thaliana (Mouse-ear cress) protein is Putative sucrose transport protein SUC6.